The chain runs to 477 residues: Ankyrin repeat, SAM and basic leucine zipper domain-containing protein 1 (477 aa).

3 positions are modified to phosphoserine: S17, S18, and S20. ANK repeat units lie at residues 46-76, 80-109, 112-146, 150-179, 183-212, and 216-245; these read EKKEKFKKALTTGDVSLVQELLDSGIISVDA, YGWTPLMYAASVANAELVRVLLDRGANASF, DKQTILITACSAHGSEEQILKCVELLLSRNADPNV, RLMTPIMYAARDGHTQVVALLVAHGAEVNT, NGYTALTWAARQGRKSIVLKLLELGANKML, and DGKLPSEIAKRNKHHEIFSLLSFTLNPLEG. Residues 274-336 enclose the SAM domain; the sequence is SYAAFGDLEV…KILTALKELE (63 aa).

Interacts with DDX4, PIWIL1, RANBP9 and TDRD1.

It localises to the cytoplasm. Plays a central role during spermatogenesis by repressing transposable elements and preventing their mobilization, which is essential for the germline integrity. Acts via the piRNA metabolic process, which mediates the repression of transposable elements during meiosis by forming complexes composed of piRNAs and Piwi proteins and governs the methylation and subsequent repression of transposons. Its association with pi-bodies suggests a participation in the primary piRNAs metabolic process. Required prior to the pachytene stage to facilitate the production of multiple types of piRNAs, including those associated with repeats involved in the regulation of retrotransposons. May act by mediating protein-protein interactions during germ cell maturation. The sequence is that of Ankyrin repeat, SAM and basic leucine zipper domain-containing protein 1 (ASZ1) from Ateles geoffroyi (Black-handed spider monkey).